The following is a 1202-amino-acid chain: DNA-directed RNA polymerase subunit beta (1202 aa).

It belongs to the RNA polymerase beta chain family. The RNAP catalytic core consists of 2 alpha, 1 beta, 1 beta' and 1 omega subunit. When a sigma factor is associated with the core the holoenzyme is formed, which can initiate transcription.

It catalyses the reaction RNA(n) + a ribonucleoside 5'-triphosphate = RNA(n+1) + diphosphate. Its function is as follows. DNA-dependent RNA polymerase catalyzes the transcription of DNA into RNA using the four ribonucleoside triphosphates as substrates. The protein is DNA-directed RNA polymerase subunit beta of Mycoplasmopsis synoviae (strain 53) (Mycoplasma synoviae).